The chain runs to 31 residues: 23S rRNA methylase leader peptide (31 aa).

This peptide is involved in the control mechanism of the synthesis of the erythromycin resistance protein. This chain is 23S rRNA methylase leader peptide (ermC), found in Escherichia coli.